The chain runs to 261 residues: Proliferating cell nuclear antigen (261 aa).

N6-acetyllysine is present on residues K14, K77, and K80. The DNA-binding element occupies 61 to 80 (RCDRNLAMGVNLTSMSKILK). A disulfide bond links C135 and C162. K164 participates in a covalent cross-link: Glycyl lysine isopeptide (Lys-Gly) (interchain with G-Cter in SUMO2); alternate. K164 participates in a covalent cross-link: Glycyl lysine isopeptide (Lys-Gly) (interchain with G-Cter in ubiquitin); alternate. Y211 carries the phosphotyrosine; by EGFR modification. K248 is subject to N6-acetyllysine. Residue K254 forms a Glycyl lysine isopeptide (Lys-Gly) (interchain with G-Cter in SUMO2) linkage.

This sequence belongs to the PCNA family. In terms of assembly, homotrimer. Interacts with p300/EP300; the interaction occurs on chromatin in UV-irradiated damaged cells. Interacts with CREBBP (via transactivation domain and C-terminus); the interaction occurs on chromatin in UV-irradiated damaged cells. Directly interacts with POLD1, POLD3 and POLD4 subunits of the DNA polymerase delta complex, POLD3 being the major interacting partner; the interaction with POLD3 is inhibited by CDKN1A/p21(CIP1). Forms a complex with activator 1 heteropentamer in the presence of ATP. Interacts with EXO1, POLH, POLK, DNMT1, ERCC5, FEN1, CDC6 and POLDIP2. Interacts with POLB. Interacts with APEX2; this interaction is triggered by reactive oxygen species and increased by misincorporation of uracil in nuclear DNA. Forms a ternary complex with DNTTIP2 and core histone. Interacts with KCTD10. Interacts with PPP1R15A. Interacts with SMARCA5/SNF2H. Interacts with BAZ1B/WSTF; the interaction is direct and is required for BAZ1B/WSTF binding to replication foci during S phase. Interacts with HLTF and SHPRH. Interacts with NUDT15; this interaction is disrupted in response to UV irradiation and acetylation. Interacts with CDKN1A/p21(CIP1) and CDT1; interacts via their PIP-box which also recruits the DCX(DTL) complex. The interaction with CDKN1A inhibits POLD3 binding. Interacts with DDX11. Interacts with EGFR; positively regulates PCNA. Interacts with PARPBP. Interacts (when ubiquitinated) with SPRTN; leading to enhance RAD18-mediated PCNA ubiquitination. Interacts (when polyubiquitinated) with ZRANB3. Interacts with SMARCAD1. Interacts with CDKN1C. Interacts with PCLAF (via PIP-box). Interacts with RTEL1 (via PIP-box); the interaction is direct and essential for the suppression of telomere fragility. Interacts with FAM111A (via PIP-box); the interaction is direct and required for PCNA loading on chromatin binding. Interacts with LIG1. Interacts with SETMAR. Interacts with ANKRD17. Interacts with FBXO18/FBH1 (via PIP-box); the interaction recruits the DCX(DTL) complex and promotes ubiquitination and degradation of FBXO18/FBH1. Interacts with POLN. Interacts with SDE2 (via PIP-box); the interaction is direct and prevents ultraviolet light induced monoubiquitination. Component of the replisome complex composed of at least DONSON, MCM2, MCM7, PCNA and TICRR; interaction at least with PCNA occurs during DNA replication. Interacts with MAPK15; the interaction is chromatin binding dependent and prevents MDM2-mediated PCNA destruction by inhibiting the association of PCNA with MDM2. Interacts with PARP10 (via PIP-box). Interacts with DDI2. Interacts with HMCES (via PIP-box). Interacts with TRAIP (via PIP-box). Interacts with UHRF2. Interacts with ALKBH2; this interaction is enhanced during the S-phase of the cell cycle. Interacts with ATAD5; the interaction promotes USP1-mediated PCNA deubiquitination. Interacts (when phosphorylated) with GRB2. Interacts with ANG. Interacts with nuclear UNG; this interaction mediates UNG recruitment to S-phase replication foci. Interacts with ERCC6L2 (via an atypical PIP-box); this interaction facilitates cenrtomeric localization of ERCC6L2. Phosphorylated. Phosphorylation at Tyr-211 by EGFR stabilizes chromatin-associated PCNA. Post-translationally, acetylated by CREBBP and p300/EP300; preferentially acetylated by CREBBP on Lys-80, Lys-13 and Lys-14 and on Lys-77 by p300/EP300 upon loading on chromatin in response to UV irradiation. Lysine acetylation disrupts association with chromatin, hence promoting PCNA ubiquitination and proteasomal degradation in response to UV damage in a CREBBP- and EP300-dependent manner. Acetylation disrupts interaction with NUDT15 and promotes degradation. In terms of processing, ubiquitinated. Following DNA damage, can be either monoubiquitinated to stimulate direct bypass of DNA lesions by specialized DNA polymerases or polyubiquitinated to promote recombination-dependent DNA synthesis across DNA lesions by template switching mechanisms. Following induction of replication stress, monoubiquitinated by the UBE2B-RAD18 complex on Lys-164, leading to recruit translesion (TLS) polymerases, which are able to synthesize across DNA lesions in a potentially error-prone manner. An error-free pathway also exists and requires non-canonical polyubiquitination on Lys-164 through 'Lys-63' linkage of ubiquitin moieties by the E2 complex UBE2N-UBE2V2 and the E3 ligases, HLTF, RNF8 and SHPRH. This error-free pathway, also known as template switching, employs recombination mechanisms to synthesize across the lesion, using as a template the undamaged, newly synthesized strand of the sister chromatid. Monoubiquitination at Lys-164 also takes place in undamaged proliferating cells, and is mediated by the DCX(DTL) complex, leading to enhance PCNA-dependent translesion DNA synthesis. Sumoylated during S phase. Methylated on glutamate residues by ARMT1.

It localises to the nucleus. Functionally, auxiliary protein of DNA polymerase delta and epsilon, is involved in the control of eukaryotic DNA replication by increasing the polymerase's processibility during elongation of the leading strand. Induces a robust stimulatory effect on the 3'-5' exonuclease and 3'-phosphodiesterase, but not apurinic-apyrimidinic (AP) endonuclease, APEX2 activities. Has to be loaded onto DNA in order to be able to stimulate APEX2. Plays a key role in DNA damage response (DDR) by being conveniently positioned at the replication fork to coordinate DNA replication with DNA repair and DNA damage tolerance pathways. Acts as a loading platform to recruit DDR proteins that allow completion of DNA replication after DNA damage and promote postreplication repair: Monoubiquitinated PCNA leads to recruitment of translesion (TLS) polymerases, while 'Lys-63'-linked polyubiquitination of PCNA is involved in error-free pathway and employs recombination mechanisms to synthesize across the lesion. The chain is Proliferating cell nuclear antigen (Pcna) from Mus musculus (Mouse).